A 115-amino-acid polypeptide reads, in one-letter code: Holo-[acyl-carrier-protein] synthase (115 aa).

Aspartate 8 and glutamate 50 together coordinate Mg(2+).

The protein belongs to the P-Pant transferase superfamily. AcpS family. Requires Mg(2+) as cofactor.

Its subcellular location is the cytoplasm. It catalyses the reaction apo-[ACP] + CoA = holo-[ACP] + adenosine 3',5'-bisphosphate + H(+). Functionally, transfers the 4'-phosphopantetheine moiety from coenzyme A to a Ser of acyl-carrier-protein. This chain is Holo-[acyl-carrier-protein] synthase, found in Renibacterium salmoninarum (strain ATCC 33209 / DSM 20767 / JCM 11484 / NBRC 15589 / NCIMB 2235).